A 456-amino-acid chain; its full sequence is Histidinol dehydrogenase homolog (456 aa).

Position 279 (H279) interacts with Zn(2+). Catalysis depends on proton acceptor residues E347 and H348. Position 440 (H440) interacts with Zn(2+).

It belongs to the histidinol dehydrogenase family. Zn(2+) is required as a cofactor.

The protein is Histidinol dehydrogenase homolog of Rhizobium meliloti (strain 1021) (Ensifer meliloti).